The following is an 81-amino-acid chain: Defensin-like protein 266 (81 aa).

A signal peptide spans 1–26 (MEKIVFRKIVFVAFLLSLSCLLEGEA). 3 disulfides stabilise this stretch: cysteine 40/cysteine 58, cysteine 46/cysteine 63, and cysteine 50/cysteine 65.

It belongs to the DEFL family.

It localises to the secreted. The protein is Defensin-like protein 266 of Arabidopsis thaliana (Mouse-ear cress).